A 20-amino-acid chain; its full sequence is GXFGKAFXSVSNFAKKHKTA.

In terms of tissue distribution, hemocytes and pharyngeal tissues.

The protein resides in the secreted. Functionally, bactericidal against several Gram-positive and Gram-negative bacteria. This is Styelin-A from Styela clava (Sea squirt).